The primary structure comprises 837 residues: Intestinal mucin-like protein (837 aa).

4 repeat units span residues 17–27, 28–38, 39–50, and 51–62. Residues 17-70 are 5 X 11 AA approximate tandem repeats; that stretch reads PSTPSTPPPSTPTTPTSSQTTTPSTPSTTSSKSTPSTPQSTSSKSTPSTPPKTT. The segment at 17 to 75 is disordered; that stretch reads PSTPSTPPPSTPTTPTSSQTTTPSTPSTTSSKSTPSTPQSTSSKSTPSTPPKTTLPGCL. A compositionally biased stretch (low complexity) spans 29–70; it reads TTPTSSQTTTPSTPSTTSSKSTPSTPQSTSSKSTPSTPPKTT. The stretch at 63–70 is one 5; truncated repeat; the sequence is PSTPPKTT. 2 N-linked (GlcNAc...) asparagine glycosylation sites follow: asparagine 91 and asparagine 164. The region spanning 141–324 is the VWFD domain; that stretch reads CYCTGWGDPH…VNDPSKPHCP (184 aa). 3 cysteine pairs are disulfide-bonded: cysteine 143–cysteine 284, cysteine 165–cysteine 323, and cysteine 189–cysteine 197. The tract at residues 149-837 is probably important for disulfide-bond mediated mucin polymerization (link domain); it reads PHFVTFDGLY…RSSPRLLGRK (689 aa). N-linked (GlcNAc...) asparagine glycosylation is found at asparagine 278, asparagine 289, asparagine 344, asparagine 410, asparagine 444, asparagine 515, asparagine 538, asparagine 612, asparagine 627, asparagine 695, asparagine 727, and asparagine 749. 2 consecutive VWFC domains span residues 472 to 543 and 581 to 648; these read CGCV…TSCK and GVCV…KKCQ. 4 disulfides stabilise this stretch: cysteine 732–cysteine 779, cysteine 746–cysteine 793, cysteine 755–cysteine 809, and cysteine 759–cysteine 811. The 86-residue stretch at 732–817 folds into the CTCK domain; it reads CSAIPVMKEI…SCLCQGTVCE (86 aa).

As to quaternary structure, multimeric. In terms of tissue distribution, coats the epithelia of the intestines.

It is found in the secreted. In Rattus norvegicus (Rat), this protein is Intestinal mucin-like protein.